The sequence spans 153 residues: MKNPRAGRPLHCRSVEELPGVTCFLPEGVPPARLRNVVLSVDEVEALRLADLEGMYHADAADKMKVSRQTFGRIIKSARKKVADALVGGKTICIEGGKITGSCLTGESEEPAVCICLHCGYEQPHVPGVPCRTANCPHCGKMLIRKGRYSRVD.

It belongs to the UPF0251 family.

The protein is UPF0251 protein CT0950 of Chlorobaculum tepidum (strain ATCC 49652 / DSM 12025 / NBRC 103806 / TLS) (Chlorobium tepidum).